The following is a 1086-amino-acid chain: NAD(P) transhydrogenase, mitochondrial (1086 aa).

Residues 1–43 (MANLLKTVVTGCSCPFLSNLGSCKVLPGKKNFLRAFHTHRILW) constitute a mitochondrion transit peptide. Over 44-474 (CKAPVKPGIP…TITPFRKTMT (431 aa)) the chain is Mitochondrial matrix. Lysine 70 is subject to N6-acetyllysine. Lysine 117 bears the N6-succinyllysine mark. 182 to 184 (RVT) contacts NAD(+). Lysine 224 carries the post-translational modification N6-succinyllysine. Residues valine 237, 257–259 (DTR), and glycine 287 each bind NAD(+). Lysine 294 carries the N6-succinyllysine modification. Glutamate 300 and leucine 319 together coordinate NAD(+). Lysine 331 is modified (N6-succinyllysine). N6-acetyllysine is present on lysine 397. Helical transmembrane passes span 475-493 (SASV…GIAA), 501-521 (MVTT…GVTP), 527-546 (LMSV…LVLM), and 558-578 (GLAA…FLVT). Over 579 to 595 (QRMLDMFKRPTDPPEYN) the chain is Mitochondrial matrix. The next 5 membrane-spanning stretches (helical) occupy residues 596–616 (YLYL…LYSG), 622–642 (IMYL…STQG), 646–666 (LGNA…LGGL), 672–691 (LLAQ…LTIA), and 702–722 (LVAA…IAEY). Over 723–739 (IIEYPHFATDAAANLTK) the chain is Cytoplasmic. A run of 5 helical transmembrane segments spans residues 740–760 (IVAY…LVAY), 778–797 (HLLN…PFMM), 801–819 (FTTG…AVMG), 833–853 (VVIT…GFLL), and 857–879 (LLTI…MCVA). Over 880-1086 (MNRSLANVIL…QAKVRESYQK (207 aa)) the chain is Mitochondrial matrix. NADP(+) contacts are provided by residues tyrosine 933, 965-970 (VAGRMP), 1007-1011 (GANDT), 1026-1027 (GM), 1042-1049 (KRSLGVGY), and 1068-1069 (DA). Lysine 1079 is subject to N6-succinyllysine.

This sequence in the N-terminal section; belongs to the AlaDH/PNT family. It in the C-terminal section; belongs to the PNT beta subunit family. In terms of assembly, homodimer.

The protein resides in the mitochondrion inner membrane. It carries out the reaction NAD(+) + NADPH + H(+)(in) = NADH + NADP(+) + H(+)(out). Its function is as follows. The transhydrogenation between NADH and NADP is coupled to respiration and ATP hydrolysis and functions as a proton pump across the membrane. May play a role in reactive oxygen species (ROS) detoxification in the adrenal gland. This is NAD(P) transhydrogenase, mitochondrial (NNT) from Ovis aries (Sheep).